The following is a 763-amino-acid chain: Ethylene receptor 2 (763 aa).

The next 3 membrane-spanning stretches (helical) occupy residues 58-78 (FLIA…ATCS), 86-106 (IVLQ…ITMF), and 115-135 (VVLA…ATAI). 2 residues coordinate Cu cation: C97 and H101. A GAF domain is found at 190 to 339 (DRHTILYTTM…VVADQVAVAL (150 aa)). Residues 382–615 (AMYDGMRRPM…TIMLALQFQL (234 aa)) enclose the Histidine kinase domain. Residues 641-760 (QVILVDSDDT…ALGDELYRVL (120 aa)) enclose the Response regulatory domain. D692 is subject to 4-aspartylphosphate.

It belongs to the ethylene receptor family. Requires Cu cation as cofactor. In terms of processing, autophosphorylated on serine, threonine and tyrosine residues.

Its subcellular location is the endoplasmic reticulum membrane. It carries out the reaction ATP + protein L-histidine = ADP + protein N-phospho-L-histidine.. Its function is as follows. Ethylene receptor related to bacterial two-component regulators. Acts as a negative regulator of ethylene signaling. May delay the transition from the vegetative stage to the floral stage by up-regulating GI (GIGANTEA) and RCN1 and cause starch accumulation in stems by down-regulating the alpha-amylase AMY3D. The sequence is that of Ethylene receptor 2 from Oryza sativa subsp. japonica (Rice).